A 275-amino-acid chain; its full sequence is Large ribosomal subunit protein uL2 (275 aa).

Residues 223–275 (VAMNPVDHPHGGGEGRTSGGRHPVSPWGQPTKGYKTRSNKRTDKYIVRRRNKK) form a disordered region.

The protein belongs to the universal ribosomal protein uL2 family. In terms of assembly, part of the 50S ribosomal subunit. Forms a bridge to the 30S subunit in the 70S ribosome.

Functionally, one of the primary rRNA binding proteins. Required for association of the 30S and 50S subunits to form the 70S ribosome, for tRNA binding and peptide bond formation. It has been suggested to have peptidyltransferase activity; this is somewhat controversial. Makes several contacts with the 16S rRNA in the 70S ribosome. This is Large ribosomal subunit protein uL2 from Shewanella halifaxensis (strain HAW-EB4).